A 194-amino-acid polypeptide reads, in one-letter code: Coiled-coil domain-containing protein 184 (194 aa).

Residues 39 to 68 adopt a coiled-coil conformation; sequence GMKELMEHLKAQLQALFEDVRAMRGALDEQ. Residues 101-176 are disordered; it reads GLGVVGGKGS…LLGGDGPLVE (76 aa). Positions 135–145 are enriched in acidic residues; it reads PEDEEEEEEEK.

This Homo sapiens (Human) protein is Coiled-coil domain-containing protein 184 (CCDC184).